Consider the following 233-residue polypeptide: MSTESMIRDVELAEEALPKKAGGPQGSRRCLCLSLFSFLLVAGATTLFCLLHFGVIGPQKEELLTGLQLMNPLAQTLRSSSQASRDKPVAHVVADPAAQGQLQWEKRFANTLLANGVKLEDNQLVVPTDGLYLIYSQVLFSGQRCPSTPVFLTHTISRLAVSYPNKANLLSAIKSPCQGGTSEEAEAKPWYEPIYLGGVFQLEKDDRLSAEINMPNYLDFAESGQVYFGIIAL.

Residues 1 to 34 (MSTESMIRDVELAEEALPKKAGGPQGSRRCLCLS) are Cytoplasmic-facing. Residue serine 2 is modified to Phosphoserine; by CK1. 2 N6-myristoyl lysine lipidation sites follow: lysine 19 and lysine 20. A helical; Signal-anchor for type II membrane protein membrane pass occupies residues 35–57 (LFSFLLVAGATTLFCLLHFGVIG). Topologically, residues 58–233 (PQKEELLTGL…GQVYFGIIAL (176 aa)) are extracellular. An O-linked (GalNAc...) serine; in soluble form glycan is attached at serine 80. In terms of domain architecture, THD spans 88 to 233 (PVAHVVADPA…GQVYFGIIAL (146 aa)). Cysteine 145 and cysteine 177 form a disulfide bridge.

It belongs to the tumor necrosis factor family. As to quaternary structure, homotrimer. Interacts with SPPL2B. In terms of processing, the soluble form derives from the membrane form by proteolytic processing. The membrane-bound form is further proteolytically processed by SPPL2A or SPPL2B through regulated intramembrane proteolysis producing TNF intracellular domains (ICD1 and ICD2) released in the cytosol and TNF C-domain 1 and C-domain 2 secreted into the extracellular space. The membrane form, but not the soluble form, is phosphorylated on serine residues. Dephosphorylation of the membrane form occurs by binding to soluble TNFRSF1A/TNFR1. Post-translationally, O-glycosylated; glycans contain galactose, N-acetylgalactosamine and N-acetylneuraminic acid. In terms of processing, the soluble form is demyristoylated by SIRT6, promoting its secretion.

The protein resides in the cell membrane. Its subcellular location is the membrane. The protein localises to the secreted. Its function is as follows. Cytokine that binds to TNFRSF1A/TNFR1 and TNFRSF1B/TNFBR. It is mainly secreted by macrophages and can induce cell death of certain tumor cell lines. It is potent pyrogen causing fever by direct action or by stimulation of interleukin-1 secretion and is implicated in the induction of cachexia, Under certain conditions it can stimulate cell proliferation and induce cell differentiation. Induces insulin resistance in adipocytes via inhibition of insulin-induced IRS1 tyrosine phosphorylation and insulin-induced glucose uptake. Induces GKAP42 protein degradation in adipocytes which is partially responsible for TNF-induced insulin resistance. Plays a role in angiogenesis by inducing VEGF production synergistically with IL1B and IL6. Promotes osteoclastogenesis and therefore mediates bone resorption. The TNF intracellular domain (ICD) form induces IL12 production in dendritic cells. The sequence is that of Tumor necrosis factor (TNF) from Camelus bactrianus (Bactrian camel).